We begin with the raw amino-acid sequence, 131 residues long: MNLIQELEKEQFDKLSAGKVIPEFGPGDTVIVNVKVVEGERSRVQAYEGVCIGRSGGGINESFTVRKISYGEGVERVFPLLSPMIDSIKVVRRGKVRRAKLYYLRDLRGKSARIVEKKQDRPAKVVAGAAE.

Belongs to the bacterial ribosomal protein bL19 family.

This protein is located at the 30S-50S ribosomal subunit interface and may play a role in the structure and function of the aminoacyl-tRNA binding site. The sequence is that of Large ribosomal subunit protein bL19 from Rhodopseudomonas palustris (strain BisB18).